A 404-amino-acid chain; its full sequence is Glucosyl-3-phosphoglycerate synthase (404 aa).

Aspartate 146 is an a divalent metal cation binding site. Residue 188-190 coordinates (2R)-3-phosphoglycerate; the sequence is GRV. Histidine 270 contacts a divalent metal cation.

This sequence belongs to the glycosyltransferase 2 family. Requires Mn(2+) as cofactor. It depends on Co(2+) as a cofactor. Mg(2+) is required as a cofactor.

It carries out the reaction an NDP-alpha-D-glucose + (2R)-3-phosphoglycerate = (2R)-2-O-(alpha-D-glucopyranosyl)-3-phospho-glycerate + a ribonucleoside 5'-diphosphate + H(+). Functionally, involved in the biosynthesis of 6-O-methylglucose lipopolysaccarides (MGLPs). Catalyzes the transfer of a glucose (Glc) moiety from uridine diphosphate (UDP-Glc) to the position 2 of 3-phospho-D-glycerate (3-PGA) to form glucosyl-3-phosphoglycerate (GPG). The polypeptide is Glucosyl-3-phosphoglycerate synthase (Methanococcoides burtonii (strain DSM 6242 / NBRC 107633 / OCM 468 / ACE-M)).